A 165-amino-acid polypeptide reads, in one-letter code: Protein SprT (165 aa).

Residues 10 to 158 (EACYRQAEHF…CRRCKATLVF (149 aa)) form the SprT-like domain. Zn(2+) is bound at residue His69. Glu70 is a catalytic residue. A Zn(2+)-binding site is contributed by His73.

The protein belongs to the SprT family. Requires Zn(2+) as cofactor.

The protein resides in the cytoplasm. This chain is Protein SprT, found in Pseudomonas aeruginosa (strain LESB58).